A 209-amino-acid chain; its full sequence is Ribonuclease HII (209 aa).

The region spanning G19 to A208 is the RNase H type-2 domain. A divalent metal cation is bound by residues D25, E26, and D117.

The protein belongs to the RNase HII family. Requires Mn(2+) as cofactor. It depends on Mg(2+) as a cofactor.

It localises to the cytoplasm. The catalysed reaction is Endonucleolytic cleavage to 5'-phosphomonoester.. Its function is as follows. Endonuclease that specifically degrades the RNA of RNA-DNA hybrids. This chain is Ribonuclease HII, found in Acidovorax ebreus (strain TPSY) (Diaphorobacter sp. (strain TPSY)).